The primary structure comprises 403 residues: S-adenosylmethionine synthase (403 aa).

His-17 contributes to the ATP binding site. A Mg(2+)-binding site is contributed by Asp-19. Glu-45 provides a ligand contact to K(+). Positions 58 and 104 each coordinate L-methionine. The interval Gln-104–Thr-114 is flexible loop. Residues Asp-179 to Lys-181, Lys-250 to Phe-251, Asp-259, Arg-265 to Lys-266, Ala-282, and Lys-286 contribute to the ATP site. Residue Asp-259 coordinates L-methionine. Residue Lys-290 participates in L-methionine binding.

This sequence belongs to the AdoMet synthase family. Homotetramer; dimer of dimers. It depends on Mg(2+) as a cofactor. K(+) serves as cofactor.

The protein resides in the cytoplasm. The catalysed reaction is L-methionine + ATP + H2O = S-adenosyl-L-methionine + phosphate + diphosphate. It participates in amino-acid biosynthesis; S-adenosyl-L-methionine biosynthesis; S-adenosyl-L-methionine from L-methionine: step 1/1. Functionally, catalyzes the formation of S-adenosylmethionine (AdoMet) from methionine and ATP. The overall synthetic reaction is composed of two sequential steps, AdoMet formation and the subsequent tripolyphosphate hydrolysis which occurs prior to release of AdoMet from the enzyme. This chain is S-adenosylmethionine synthase, found in Mycobacterium avium (strain 104).